The sequence spans 290 residues: Phosphonopyruvate hydrolase (290 aa).

40–44 (WGSGF) serves as a coordination point for substrate. Asp-54 functions as the Nucleophile in the catalytic mechanism. Position 81 (Asp-81) interacts with Mg(2+). Substrate contacts are provided by Arg-155, His-186, and Arg-188.

As to quaternary structure, homodimer. Homotetramer. Requires Co(2+) as cofactor. Mg(2+) is required as a cofactor. It depends on Mn(2+) as a cofactor.

The catalysed reaction is 3-phosphonopyruvate + H2O = pyruvate + phosphate + H(+). With respect to regulation, partially inhibited by EDTA. Activity is restored by Co(2+), and to a lesser extent by Ni(2+) and Mg(2+). Unaffected by Cs(2+) and Ca(2+). Activity is reduced by Mn(2+) and Cu(2+). In terms of biological role, hydrolyzes phosphonopyruvate. Not active towards phosphoenolpyruvate, glycerophosphate, phospho-L-serine or phosphoglycolic acid. The sequence is that of Phosphonopyruvate hydrolase from Variovorax sp. (strain Pal2).